The chain runs to 418 residues: Serine hydroxymethyltransferase (418 aa).

(6S)-5,6,7,8-tetrahydrofolate is bound by residues L121 and 125 to 127 (GHL). An N6-(pyridoxal phosphate)lysine modification is found at K230. 356-358 (SPF) is a (6S)-5,6,7,8-tetrahydrofolate binding site.

Belongs to the SHMT family. As to quaternary structure, homodimer. Pyridoxal 5'-phosphate serves as cofactor.

It is found in the cytoplasm. The catalysed reaction is (6R)-5,10-methylene-5,6,7,8-tetrahydrofolate + glycine + H2O = (6S)-5,6,7,8-tetrahydrofolate + L-serine. The protein operates within one-carbon metabolism; tetrahydrofolate interconversion. It functions in the pathway amino-acid biosynthesis; glycine biosynthesis; glycine from L-serine: step 1/1. Functionally, catalyzes the reversible interconversion of serine and glycine with tetrahydrofolate (THF) serving as the one-carbon carrier. This reaction serves as the major source of one-carbon groups required for the biosynthesis of purines, thymidylate, methionine, and other important biomolecules. Also exhibits THF-independent aldolase activity toward beta-hydroxyamino acids, producing glycine and aldehydes, via a retro-aldol mechanism. The protein is Serine hydroxymethyltransferase of Shewanella woodyi (strain ATCC 51908 / MS32).